The chain runs to 341 residues: MNHKKDLYVLGIETSCDETAAAIVKNGTDIISNVVASQIESHKRFGGVVPEIASRHHVEQITIVLEEAFAQADMTFDDIDAIAVTEGPGLVGALLIGVNAAKALSFARGIPLVGVHHIAGHIYANRLVQDIQFPAIALVVSGGHTELVYMKEHGSFEVIGETLDDAAGEAYDKVARTMGLPYPGGPHIDKLAQKGEANVPLPRAWLEEGSYHFSFSGLKSAVINTLHNASQKGETIAPEDLSASFQESVIDVLVTKTERAAEAYGVKQVLLAGGVAANKGLRAALEKTFSSRPEIELLIPPLSLCTDNAAMIAAAGTVAFEKGIRGKYDMNGQPGLDLTSY.

The Fe cation site is built by H117 and H121. Substrate contacts are provided by residues 139–143 (VVSGG), D172, G185, D189, and N278. D307 serves as a coordination point for Fe cation.

Belongs to the KAE1 / TsaD family. Fe(2+) is required as a cofactor.

Its subcellular location is the cytoplasm. The catalysed reaction is L-threonylcarbamoyladenylate + adenosine(37) in tRNA = N(6)-L-threonylcarbamoyladenosine(37) in tRNA + AMP + H(+). Its function is as follows. Required for the formation of a threonylcarbamoyl group on adenosine at position 37 (t(6)A37) in tRNAs that read codons beginning with adenine. Is involved in the transfer of the threonylcarbamoyl moiety of threonylcarbamoyl-AMP (TC-AMP) to the N6 group of A37, together with TsaE and TsaB. TsaD likely plays a direct catalytic role in this reaction. In Bacillus licheniformis (strain ATCC 14580 / DSM 13 / JCM 2505 / CCUG 7422 / NBRC 12200 / NCIMB 9375 / NCTC 10341 / NRRL NRS-1264 / Gibson 46), this protein is tRNA N6-adenosine threonylcarbamoyltransferase.